Reading from the N-terminus, the 639-residue chain is Lipoteichoic acid synthase 1 (639 aa).

Residues 1–3 (MKK) are Cytoplasmic-facing. A helical membrane pass occupies residues 4-24 (LFSYKLSFFVLAVILFWAKTY). Residues 25-41 (LSYKTEFNLGVKGTTQE) are Extracellular-facing. A helical membrane pass occupies residues 42–62 (ILLIFNPFSSAVFFLGLALLA). The Cytoplasmic portion of the chain corresponds to 63-67 (KGRKS). A helical membrane pass occupies residues 68 to 88 (AIIMLIIDFLMTFVLYANILF). Residues 89-116 (YRFFDDFLTFPNIKQSGNVGNMGDGIFS) are Extracellular-facing. Residues 117-137 (IMAGHDIFYFLDIIILIAVLI) traverse the membrane as a helical segment. Over 138–150 (WRPELKEYKMKKR) the chain is Cytoplasmic. The helical transmembrane segment at 151 to 171 (FASLVILSGIALFFINLHYAE) threads the bilayer. The Extracellular segment spans residues 172–639 (KDRPQLLTRT…YHYGKEKEIK (468 aa)). Residues Glu-252 and Thr-297 each coordinate Mn(2+). Thr-297 is an active-site residue. Substrate is bound at residue His-413. Mn(2+)-binding residues include Asp-472 and His-473.

The protein belongs to the LTA synthase family. Proteolytically cleaved by the type I signal peptidases SipT and SipV.

Its subcellular location is the cell membrane. The protein localises to the secreted. The protein operates within cell wall biogenesis; lipoteichoic acid biosynthesis. Its function is as follows. Catalyzes the polymerization of lipoteichoic acid (LTA) polyglycerol phosphate, a reaction that presumably uses phosphatidylglycerol (PG) as substrate. The chain is Lipoteichoic acid synthase 1 (ltaS1) from Bacillus subtilis (strain 168).